We begin with the raw amino-acid sequence, 191 residues long: GDP-mannose pyrophosphatase (191 aa).

GDP-alpha-D-mannose-binding positions include Y17, 38–40 (KRE), R67, and 85–87 (AGL). Residues 43-180 (DRGNGATILL…EIRDGKTVLL (138 aa)) enclose the Nudix hydrolase domain. Positions 85, 100, and 104 each coordinate Mg(2+). The Nudix box signature appears at 86–106 (GLLDNDEPEVCIRKEAIEETG). GDP-alpha-D-mannose is bound by residues E104, E127, 150–151 (DE), and K176. E151 contacts Mg(2+).

Belongs to the Nudix hydrolase family. NudK subfamily. As to quaternary structure, homodimer. Requires Mg(2+) as cofactor.

It catalyses the reaction GDP-alpha-D-mannose + H2O = alpha-D-mannose 1-phosphate + GMP + 2 H(+). Its function is as follows. Nucleoside diphosphate sugar hydrolase that hydrolyzes GDP-mannose as its preferred substrate, yielding GMP and mannose-1-phosphate. This is GDP-mannose pyrophosphatase (nudK) from Salmonella arizonae (strain ATCC BAA-731 / CDC346-86 / RSK2980).